The following is a 559-amino-acid chain: Urocanate hydratase (559 aa).

Residues Gly-54–Gly-55, Gln-132, Gly-178–Gly-180, Glu-198, Arg-203, Asn-244–Ala-245, Gln-265–His-269, Tyr-275–Leu-276, and Tyr-324 contribute to the NAD(+) site. Cys-412 is a catalytic residue. NAD(+) is bound at residue Gly-494.

It belongs to the urocanase family. NAD(+) is required as a cofactor.

The protein localises to the cytoplasm. The catalysed reaction is 4-imidazolone-5-propanoate = trans-urocanate + H2O. It participates in amino-acid degradation; L-histidine degradation into L-glutamate; N-formimidoyl-L-glutamate from L-histidine: step 2/3. Its function is as follows. Catalyzes the conversion of urocanate to 4-imidazolone-5-propionate. In Azotobacter vinelandii (strain DJ / ATCC BAA-1303), this protein is Urocanate hydratase.